The primary structure comprises 157 residues: SsrA-binding protein (157 aa).

It belongs to the SmpB family.

The protein localises to the cytoplasm. Its function is as follows. Required for rescue of stalled ribosomes mediated by trans-translation. Binds to transfer-messenger RNA (tmRNA), required for stable association of tmRNA with ribosomes. tmRNA and SmpB together mimic tRNA shape, replacing the anticodon stem-loop with SmpB. tmRNA is encoded by the ssrA gene; the 2 termini fold to resemble tRNA(Ala) and it encodes a 'tag peptide', a short internal open reading frame. During trans-translation Ala-aminoacylated tmRNA acts like a tRNA, entering the A-site of stalled ribosomes, displacing the stalled mRNA. The ribosome then switches to translate the ORF on the tmRNA; the nascent peptide is terminated with the 'tag peptide' encoded by the tmRNA and targeted for degradation. The ribosome is freed to recommence translation, which seems to be the essential function of trans-translation. In Clostridium novyi (strain NT), this protein is SsrA-binding protein.